Reading from the N-terminus, the 773-residue chain is Subtilisin-like protease SBT3.4 (773 aa).

The signal sequence occupies residues 1-23 (MRNFRSSVLVVLSLIIVLNVARA). The propeptide at 24–108 (SAKSKVHIVY…VIPDSYYELA (85 aa)) is activation peptide. Positions 29–108 (VHIVYLGEKQ…VIPDSYYELA (80 aa)) constitute an Inhibitor I9 domain. Residues 112–620 (IWDYLGPSAD…GGLVNPEKAA (509 aa)) enclose the Peptidase S8 domain. The Charge relay system role is filled by D142. N-linked (GlcNAc...) asparagine glycosylation occurs at N200. H216 serves as the catalytic Charge relay system. N-linked (GlcNAc...) asparagine glycosylation is found at N231, N408, and N536. Residues 382–474 (SLVYPEDPGN…IDNELGTDIL (93 aa)) enclose the PA domain. The active-site Charge relay system is the S551. N643 carries N-linked (GlcNAc...) asparagine glycosylation.

It belongs to the peptidase S8 family.

Its subcellular location is the secreted. This Arabidopsis thaliana (Mouse-ear cress) protein is Subtilisin-like protease SBT3.4.